The sequence spans 313 residues: tRNA dimethylallyltransferase (313 aa).

ATP is bound at residue 13–20 (GPTASGKT). 15 to 20 (TASGKT) serves as a coordination point for substrate. 4 interaction with substrate tRNA regions span residues 38-41 (DSAL), 162-166 (QRLSR), 243-248 (RCVGYR), and 276-283 (KRQITWLR).

The protein belongs to the IPP transferase family. Monomer. Mg(2+) serves as cofactor.

The catalysed reaction is adenosine(37) in tRNA + dimethylallyl diphosphate = N(6)-dimethylallyladenosine(37) in tRNA + diphosphate. Catalyzes the transfer of a dimethylallyl group onto the adenine at position 37 in tRNAs that read codons beginning with uridine, leading to the formation of N6-(dimethylallyl)adenosine (i(6)A). The protein is tRNA dimethylallyltransferase of Aliivibrio salmonicida (strain LFI1238) (Vibrio salmonicida (strain LFI1238)).